The chain runs to 252 residues: 3-deoxy-manno-octulosonate cytidylyltransferase (252 aa).

This sequence belongs to the KdsB family.

It is found in the cytoplasm. The catalysed reaction is 3-deoxy-alpha-D-manno-oct-2-ulosonate + CTP = CMP-3-deoxy-beta-D-manno-octulosonate + diphosphate. The protein operates within nucleotide-sugar biosynthesis; CMP-3-deoxy-D-manno-octulosonate biosynthesis; CMP-3-deoxy-D-manno-octulosonate from 3-deoxy-D-manno-octulosonate and CTP: step 1/1. It functions in the pathway bacterial outer membrane biogenesis; lipopolysaccharide biosynthesis. Its function is as follows. Activates KDO (a required 8-carbon sugar) for incorporation into bacterial lipopolysaccharide in Gram-negative bacteria. This chain is 3-deoxy-manno-octulosonate cytidylyltransferase, found in Phocaeicola vulgatus (strain ATCC 8482 / DSM 1447 / JCM 5826 / CCUG 4940 / NBRC 14291 / NCTC 11154) (Bacteroides vulgatus).